The sequence spans 352 residues: Rhodopsin, freshwater form (352 aa).

The Extracellular segment spans residues 1–36 (MNGTEGPNFYVPMSNVTGVVRSPFEYPQYYLAEPWA). Residues N2 and N15 are each glycosylated (N-linked (GlcNAc...) asparagine). The helical transmembrane segment at 37–61 (YSALAAYMFFLIIAGFPINFLTLYV) threads the bilayer. Residues 62-73 (TIEHKKLRTPLN) lie on the Cytoplasmic side of the membrane. Residues 74–98 (YILLNLAVADLFMVFGGFTTTMYTS) form a helical membrane-spanning segment. Residues 99 to 113 (MHGYFVFGPTGCNIE) lie on the Extracellular side of the membrane. The cysteines at positions 110 and 187 are disulfide-linked. A helical transmembrane segment spans residues 114 to 133 (GFFATLGGEIALWCLVVLAV). Over 134–152 (ERWMVVCKPMSNFRFGENH) the chain is Cytoplasmic. The chain crosses the membrane as a helical span at residues 153-176 (AIMGVAFTWVMALACAAPPLFGWS). The Extracellular segment spans residues 177–202 (RYIPEGMQCSCGMDHYAPNPETYNES). An N-linked (GlcNAc...) asparagine glycan is attached at N200. The chain crosses the membrane as a helical span at residues 203–230 (FVIYMFICHFTIPLTVISFCYGRLVCTV). Residues 231–252 (KEATAQQQESETTQRAEREVTR) are Cytoplasmic-facing. Residues 253–276 (MVIIMVISFLVCWVPYASVAWYIF) form a helical membrane-spanning segment. The Extracellular portion of the chain corresponds to 277–284 (THQGSSFG). Residues 285–309 (PIFMTIPAFFAKSSSLYNPLIYICM) traverse the membrane as a helical segment. K296 is modified (N6-(retinylidene)lysine). Residues 310–352 (NKQSRNCMITTLCCGKNPFEEEEGASTTASKTEASSVSSVSPA) lie on the Cytoplasmic side of the membrane. C323 is lipidated: S-palmitoyl cysteine. The interval 330-352 (EEEGASTTASKTEASSVSSVSPA) is disordered. Over residues 334–352 (ASTTASKTEASSVSSVSPA) the composition is skewed to low complexity.

Belongs to the G-protein coupled receptor 1 family. Opsin subfamily. Phosphorylated on some or all of the serine and threonine residues present in the C-terminal region. In terms of tissue distribution, rod shaped photoreceptor cells which mediates vision in dim light.

It is found in the membrane. Visual pigments such as rhodopsin and porphyropsin are light-absorbing molecules that mediate vision. Rhodopsin consists of an apoprotein, opsin, covalently linked to 11-cis-retinal. This receptor is coupled to the activation of phospholipase C. Porphyropsin consists of opsin covalently linked to 11-cis 3,4-didehydroretinal. This Anguilla anguilla (European freshwater eel) protein is Rhodopsin, freshwater form.